The sequence spans 569 residues: Proline--tRNA ligase (569 aa).

Belongs to the class-II aminoacyl-tRNA synthetase family. ProS type 1 subfamily. As to quaternary structure, homodimer.

Its subcellular location is the cytoplasm. It catalyses the reaction tRNA(Pro) + L-proline + ATP = L-prolyl-tRNA(Pro) + AMP + diphosphate. Functionally, catalyzes the attachment of proline to tRNA(Pro) in a two-step reaction: proline is first activated by ATP to form Pro-AMP and then transferred to the acceptor end of tRNA(Pro). As ProRS can inadvertently accommodate and process non-cognate amino acids such as alanine and cysteine, to avoid such errors it has two additional distinct editing activities against alanine. One activity is designated as 'pretransfer' editing and involves the tRNA(Pro)-independent hydrolysis of activated Ala-AMP. The other activity is designated 'posttransfer' editing and involves deacylation of mischarged Ala-tRNA(Pro). The misacylated Cys-tRNA(Pro) is not edited by ProRS. The chain is Proline--tRNA ligase from Levilactobacillus brevis (strain ATCC 367 / BCRC 12310 / CIP 105137 / JCM 1170 / LMG 11437 / NCIMB 947 / NCTC 947) (Lactobacillus brevis).